The chain runs to 141 residues: Regulator of ribonuclease activity B (141 aa).

Positions 112–141 are disordered; it reads GTYFEDPNAPDDEDDNDDLFPPEEDEPRLH. Acidic residues predominate over residues 119–141; that stretch reads NAPDDEDDNDDLFPPEEDEPRLH.

Belongs to the RraB family. In terms of assembly, interacts with the C-terminal region of Rne.

It is found in the cytoplasm. Functionally, globally modulates RNA abundance by binding to RNase E (Rne) and regulating its endonucleolytic activity. Can modulate Rne action in a substrate-dependent manner by altering the composition of the degradosome. In Xenorhabdus nematophila (strain ATCC 19061 / DSM 3370 / CCUG 14189 / LMG 1036 / NCIMB 9965 / AN6), this protein is Regulator of ribonuclease activity B.